The following is a 481-amino-acid chain: Chromosomal replication initiator protein DnaA (481 aa).

The interval 1 to 71 (MTDLSAFWPQ…ETFAEDILGR (71 aa)) is domain I, interacts with DnaA modulators. The segment at 71–143 (RPVTIELRIG…PAIGGGHEST (73 aa)) is domain II. Positions 86 to 96 (ASAPAAASPRS) are enriched in low complexity. Residues 86-110 (ASAPAAASPRSPGRPAPAPVAATPT) form a disordered region. Residues 144 to 361 (RLNPAFTFES…GALKRVVAYS (218 aa)) form a domain III, AAA+ region region. ATP contacts are provided by glycine 189, glycine 191, lysine 192, and threonine 193. The tract at residues 362–481 (RFSNQPISLD…YAALQQMLRN (120 aa)) is domain IV, binds dsDNA.

The protein belongs to the DnaA family. In terms of assembly, oligomerizes as a right-handed, spiral filament on DNA at oriC.

Its subcellular location is the cytoplasm. Plays an essential role in the initiation and regulation of chromosomal replication. ATP-DnaA binds to the origin of replication (oriC) to initiate formation of the DNA replication initiation complex once per cell cycle. Binds the DnaA box (a 9 base pair repeat at the origin) and separates the double-stranded (ds)DNA. Forms a right-handed helical filament on oriC DNA; dsDNA binds to the exterior of the filament while single-stranded (ss)DNA is stabiized in the filament's interior. The ATP-DnaA-oriC complex binds and stabilizes one strand of the AT-rich DNA unwinding element (DUE), permitting loading of DNA polymerase. After initiation quickly degrades to an ADP-DnaA complex that is not apt for DNA replication. Binds acidic phospholipids. This Laribacter hongkongensis (strain HLHK9) protein is Chromosomal replication initiator protein DnaA.